Reading from the N-terminus, the 466-residue chain is Vimentin (466 aa).

Low complexity predominate over residues 1 to 13 (MSTRSVSSSSYRR). Positions 1–32 (MSTRSVSSSSYRRMFGGPGTGSRPSSTRSYVT) are disordered. An N-acetylserine modification is found at Ser-2. The interval 2-95 (STRSVSSSSY…FSLADAINTE (94 aa)) is head. Ser-5, Ser-7, Ser-8, Ser-9, and Ser-10 each carry phosphoserine. An O-linked (GlcNAc) serine; alternate glycan is attached at Ser-7. The residue at position 20 (Thr-20) is a Phosphothreonine. Over residues 21–32 (GSRPSSTRSYVT) the composition is skewed to low complexity. Ser-25 and Ser-26 each carry phosphoserine. The O-linked (GlcNAc) threonine glycan is linked to Thr-33. Residues Ser-34, Ser-39, Ser-42, Ser-47, Ser-49, and Ser-51 each carry the phosphoserine modification. An O-linked (GlcNAc) serine; alternate glycan is attached at Ser-34. At Tyr-53 the chain carries Phosphotyrosine. Phosphoserine is present on residues Ser-55 and Ser-56. At Tyr-61 the chain carries Phosphotyrosine. Phosphoserine occurs at positions 66, 72, 73, 83, and 87. The coil 1A stretch occupies residues 96 to 131 (FKNTRTNEKVELQELNDRFANYIDKVRFLEQQNKIL). Residues 96–131 (FKNTRTNEKVELQELNDRFANYIDKVRFLEQQNKIL) adopt a coiled-coil conformation. Residues 103 to 411 (EKVELQELND…KLLEGEESRI (309 aa)) form the IF rod domain. Lys-104 is covalently cross-linked (Glycyl lysine isopeptide (Lys-Gly) (interchain with G-Cter in SUMO2)). The residue at position 117 (Tyr-117) is a Phosphotyrosine. An N6-acetyllysine; alternate mark is found at Lys-120, Lys-129, and Lys-139. An N6-succinyllysine; alternate mark is found at Lys-120 and Lys-129. Residues Lys-120, Lys-129, and Lys-139 each participate in a glycyl lysine isopeptide (Lys-Gly) (interchain with G-Cter in SUMO2); alternate cross-link. The interval 132–153 (LAELEQLKGQGKSRLGDLYEEE) is linker 1. Phosphoserine is present on Ser-144. Residues 154 to 245 (MRELRRQVDQ…KLHDEEIQEL (92 aa)) adopt a coiled-coil conformation. The interval 154–245 (MRELRRQVDQ…KLHDEEIQEL (92 aa)) is coil 1B. Lys-168 carries the post-translational modification N6-acetyllysine. Lys-188 carries the post-translational modification N6-acetyllysine; alternate. The residue at position 188 (Lys-188) is an N6-succinyllysine; alternate. Position 214 is a phosphoserine (Ser-214). Lys-223 bears the N6-acetyllysine; alternate mark. Lys-223 is covalently cross-linked (Glycyl lysine isopeptide (Lys-Gly) (interchain with G-Cter in SUMO2); alternate). Residue Ser-226 is modified to Phosphoserine. An N6-acetyllysine modification is found at Lys-235. Residues 246 to 268 (QAQIQDQHVQIDMDVSKPDLTAA) are linker 12. Lys-262 participates in a covalent cross-link: Glycyl lysine isopeptide (Lys-Gly) (interchain with G-Cter in SUMO2). A coil 2 region spans residues 269-407 (LRDVRQQYES…ATYRKLLEGE (139 aa)). Lys-294 carries the post-translational modification N6-acetyllysine; alternate. N6-succinyllysine; alternate is present on Lys-294. A Glycyl lysine isopeptide (Lys-Gly) (interchain with G-Cter in SUMO2); alternate cross-link involves residue Lys-294. At Ser-299 the chain carries Phosphoserine. Residues 303 to 407 (NRNNDALRQA…ATYRKLLEGE (105 aa)) adopt a coiled-coil conformation. Lys-313 participates in a covalent cross-link: Glycyl lysine isopeptide (Lys-Gly) (interchain with G-Cter in SUMO2). The residue at position 325 (Ser-325) is a Phosphoserine. Residues 326-329 (LTCE) carry the [IL]-x-C-x-x-[DE] motif motif. Position 373 is an N6-acetyllysine; alternate (Lys-373). Lys-373 participates in a covalent cross-link: Glycyl lysine isopeptide (Lys-Gly) (interchain with G-Cter in SUMO2); alternate. The interval 408 to 466 (ESRIALPLPNFSSLNLRETNLDSLPLVDTHSKRTLLIKTVETRDGQVINETSQHHDDLE) is tail. Phosphoserine is present on residues Ser-409, Ser-419, and Ser-420. Thr-426 carries the phosphothreonine modification. A Phosphoserine modification is found at Ser-430. The residue at position 436 (Thr-436) is a Phosphothreonine. Phosphoserine is present on Ser-438. A Glycyl lysine isopeptide (Lys-Gly) (interchain with G-Cter in SUMO2) cross-link involves residue Lys-439. Lys-445 bears the N6-acetyllysine; alternate mark. Lys-445 carries the N6-succinyllysine; alternate modification. Lys-445 is covalently cross-linked (Glycyl lysine isopeptide (Lys-Gly) (interchain with G-Cter in SUMO2); alternate). Lys-445 participates in a covalent cross-link: Glycyl lysine isopeptide (Lys-Gly) (interchain with G-Cter in SUMO1); alternate. A phosphothreonine mark is found at Thr-446 and Thr-458. At Ser-459 the chain carries Phosphoserine.

It belongs to the intermediate filament family. As to quaternary structure, homomer assembled from elementary dimers. Identified in complexes that contain VIM, EZR, AHNAK, BFSP1, BFSP2, ANK2, PLEC, PRX and spectrin. Interacts with BCAS3. Interacts with LGSN. Interacts with SYNM. Interacts (via rod region) with PLEC (via CH 1 domain). Interacts with STK33. Interacts with LARP6. Interacts with RAB8B. Interacts with TOR1A; the interaction associates TOR1A with the cytoskeleton. Interacts with TOR1AIP1. Interacts with TOR1AIP1. Interacts with DIAPH1. Interacts with EPPK1; interaction is dependent of higher-order structure of intermediate filament. Interacts with the non-receptor tyrosine kinase SRMS; the interaction leads to phosphorylation of VIM. Interacts with NOD2. Interacts (via head region) with CORO1C. Interacts with HDGF. Interacts with PRKCE (via phorbol-ester/DAG-type 2 domain). Interacts with BFSP2. Interacts with PPL. Interacts with PKP1 and PKP2. Interacts with SCRIB (via PDZ domains); the interaction protects SCRIB from proteasomal degradation and facilitates SCRIB localization to intermediate filaments, the interaction is reduced by cell contact inhibition. Post-translationally, filament disassembly during mitosis is promoted by phosphorylation at Ser-55 as well as by nestin. One of the most prominent phosphoproteins in various cells of mesenchymal origin. Phosphorylation is enhanced during cell division, at which time vimentin filaments are significantly reorganized. Phosphorylation by PKN1 inhibits the formation of filaments. Phosphorylated at Ser-56 by CDK5 during neutrophil secretion in the cytoplasm. Phosphorylated by STK33. Phosphorylated on tyrosine residues by SRMS. In terms of processing, O-glycosylated during cytokinesis at sites identical or close to phosphorylation sites, this interferes with the phosphorylation status. S-nitrosylation is induced by interferon-gamma and oxidatively-modified low-densitity lipoprotein (LDL(ox)) possibly implicating the iNOS-S100A8/9 transnitrosylase complex.

It localises to the cytoplasm. It is found in the cytoskeleton. Its subcellular location is the nucleus matrix. The protein resides in the cell membrane. In terms of biological role, vimentins are class-III intermediate filaments found in various non-epithelial cells, especially mesenchymal cells. Vimentin is attached to the nucleus, endoplasmic reticulum, and mitochondria, either laterally or terminally. Plays a role in cell directional movement, orientation, cell sheet organization and Golgi complex polarization at the cell migration front. Protects SCRIB from proteasomal degradation and facilitates its localization to intermediate filaments in a cell contact-mediated manner. Its function is as follows. Involved with LARP6 in the stabilization of type I collagen mRNAs for CO1A1 and CO1A2. In Canis lupus familiaris (Dog), this protein is Vimentin (VIM).